The chain runs to 688 residues: Methionine--tRNA ligase (688 aa).

The 'HIGH' region signature appears at 13 to 23 (PYANGNFHIGH). Positions 144, 147, 157, and 160 each coordinate Zn(2+). The 'KMSKS' region motif lies at 342–346 (KMSKS). Residue lysine 345 coordinates ATP. The region spanning 582-688 (DFAKVDLRIA…PGAQPGMRIH (107 aa)) is the tRNA-binding domain.

Belongs to the class-I aminoacyl-tRNA synthetase family. MetG type 1 subfamily. In terms of assembly, homodimer. Zn(2+) serves as cofactor.

Its subcellular location is the cytoplasm. The enzyme catalyses tRNA(Met) + L-methionine + ATP = L-methionyl-tRNA(Met) + AMP + diphosphate. In terms of biological role, is required not only for elongation of protein synthesis but also for the initiation of all mRNA translation through initiator tRNA(fMet) aminoacylation. The sequence is that of Methionine--tRNA ligase from Acidovorax ebreus (strain TPSY) (Diaphorobacter sp. (strain TPSY)).